The primary structure comprises 286 residues: Elongation factor Ts (286 aa).

The segment at 79 to 82 (TDFV) is involved in Mg(2+) ion dislocation from EF-Tu.

Belongs to the EF-Ts family.

It is found in the cytoplasm. Functionally, associates with the EF-Tu.GDP complex and induces the exchange of GDP to GTP. It remains bound to the aminoacyl-tRNA.EF-Tu.GTP complex up to the GTP hydrolysis stage on the ribosome. The protein is Elongation factor Ts of Wolbachia pipientis wMel.